The following is a 1640-amino-acid chain: Clathrin heavy chain 2 (1640 aa).

At Ala2 the chain carries N-acetylalanine. Residues 2–479 (AQILPVRFQE…TDPMLALSVY (478 aa)) form a globular terminal domain region. 7 WD40-like repeat regions span residues 24-67 (NIGF…RPIS), 68-107 (AESAIMNPASKVIALKAGKTLQIFNIEMKSKMKAHTMAEE), 108-149 (VIFW…TSLV), 150-195 (GCQV…QPIE), 196-257 (GHAA…PEAQ), 258-301 (NDFP…ISAD), and 302-330 (TIFVTAPHKPTSGIIGVNKKGQVLSVCVE). Ser67 carries the phosphoserine modification. Tyr184 is subject to Phosphotyrosine. The residue at position 394 (Thr394) is a Phosphothreonine. The tract at residues 449-465 (EKWLKEDKLECSEELGD) is binding site for the uncoating ATPase, involved in lattice disassembly. Residues 480–523 (LRANVPSKVIQCFAETGQFQKIVLYAKKVGYTPDWIFLLRGVMK) form a flexible linker region. Positions 524–634 (ISPEQGLQFS…QALEHYTDLY (111 aa)) are distal segment. Residues 524–1640 (ISPEQGLQFS…PLVFDFDGHE (1117 aa)) are heavy chain arm. 7 CHCR repeats span residues 537 to 683 (VQDE…QLCV), 686 to 828 (ASKY…SEEV), 833 to 972 (IMAV…QLID), 979 to 1124 (LSET…VKEA), 1128 to 1269 (YIRG…FRFA), 1274 to 1420 (LHIV…LLIN), and 1423 to 1566 (LLVL…RECF). Tyr634 bears the Phosphotyrosine mark. The interval 639 to 1640 (AVVHTHLLNP…PLVFDFDGHE (1002 aa)) is proximal segment. An N6-succinyllysine modification is found at Lys737. At Lys856 the chain carries N6-acetyllysine. Tyr899 carries the phosphotyrosine modification. Residue Ser1167 is modified to Phosphoserine. The residue at position 1206 (Tyr1206) is a Phosphotyrosine. The involved in binding clathrin light chain stretch occupies residues 1213–1522 (AAKLLYSNVS…YLYKGNNWWA (310 aa)). Ser1229 carries the post-translational modification Phosphoserine. An N6-acetyllysine; alternate modification is found at Lys1441. Residue Lys1441 is modified to N6-succinyllysine; alternate. Tyr1477 and Tyr1487 each carry phosphotyrosine. Residue Ser1494 is modified to Phosphoserine. Lys1501 carries the N6-acetyllysine modification. The tract at residues 1551 to 1640 (QKLLQWFLEE…PLVFDFDGHE (90 aa)) is trimerization.

This sequence belongs to the clathrin heavy chain family. As to quaternary structure, clathrin triskelions, composed of 3 heavy chains and 3 light chains, are the basic subunits of the clathrin coat. In the presence of light chains, hub assembly is influenced by both the pH and the concentration of calcium. May interact with OCRL. Interacts with AFTPH/aftiphilin. In terms of tissue distribution, maximal levels in skeletal muscle. High levels in heart and testis. Low expression detected in all other tissues.

The protein localises to the cytoplasmic vesicle membrane. Its subcellular location is the membrane. The protein resides in the coated pit. Functionally, clathrin is the major protein of the polyhedral coat of coated pits and vesicles. Two different adapter protein complexes link the clathrin lattice either to the plasma membrane or to the trans-Golgi network. This Homo sapiens (Human) protein is Clathrin heavy chain 2 (CLTCL1).